Consider the following 215-residue polypeptide: S-crystallin 4 (215 aa).

The GST N-terminal domain maps to 2–80; the sequence is PSYTLHYFNH…YLAREFGFHG (79 aa). In terms of domain architecture, GST C-terminal spans 82–215; it reads NNMDMARVDY…YLQKRSRTEF (134 aa).

Belongs to the GST superfamily. In terms of tissue distribution, lens.

Functionally, S-crystallins are structural components of squids and octopi eye lens. Contains relatively little if any GST activity. This Enteroctopus dofleini (North Pacific giant octopus) protein is S-crystallin 4.